The sequence spans 145 residues: Oleosin L (145 aa).

N-acetylalanine is present on alanine 2. 2 consecutive transmembrane segments (helical) span residues 36–56 and 59–79; these read GSLLVLSGLTLAGTVIALTIA and LLVIFSPVLVPAVITIFLLGA. Positions 58-69 match the Proline-knot motif; sequence PLLVIFSPVLVP. Over residues 123–132 the composition is skewed to basic and acidic residues; sequence KAREMKDRAE. The segment at 123-145 is disordered; it reads KAREMKDRAEQFSQQPVAGSQTS. The segment covering 133–145 has biased composition (polar residues); it reads QFSQQPVAGSQTS.

The protein belongs to the oleosin family. Expressed in seeds (at protein level).

It is found in the lipid droplet. It localises to the membrane. Functionally, may have a structural role to stabilize the lipid body during desiccation of the seed by preventing coalescence of the oil. Probably interacts with both lipid and phospholipid moieties of lipid bodies. May also provide recognition signals for specific lipase anchorage in lipolysis during seedling growth. This chain is Oleosin L, found in Sesamum indicum (Oriental sesame).